The primary structure comprises 49 residues: Large ribosomal subunit protein bL33 (49 aa).

This sequence belongs to the bacterial ribosomal protein bL33 family.

The polypeptide is Large ribosomal subunit protein bL33 (Streptococcus gordonii (strain Challis / ATCC 35105 / BCRC 15272 / CH1 / DL1 / V288)).